A 766-amino-acid polypeptide reads, in one-letter code: MASTRSIELEHFEERDKRPRPGSRRGAPSSSGGSSSSGPKGNGLIPSPAHSAHCSFYRTRTLQALSSEKKAKKARFYRNGDRYFKGLVFAISSDRFRSFDALLIELTRSLSDNVNLPQGVRTIYTIDGSRKVTSLDELLEGESYVCASNEPFRKVDYTKNINPNWSVNIKGGTSRALAAASSVKSEVKESKDFIKPKLVTVIRSGVKPRKAVRILLNKKTAHSFEQVLTDITEAIKLDSGVVKRLCTLDGKQVTCLQDFFGDDDVFIACGPEKFRYAQDDFVLDHSECRVLKSSYSRSSAVKYSGSKSPGPSRRSKSPASVNGTPSSQLSTPKSTKSSSSSPTSPGSFRGLKQISAHGRSSSNVNGGPELDRCISPEGVNGNRCSESSTLLEKYKIGKVIGDGNFAVVKECIDRSTGKEFALKIIDKAKCCGKEHLIENEVSILRRVKHPNIIMLVEEMETATELFLVMELVKGGDLFDAITSSTKYTERDGSAMVYNLANALRYLHGLSIVHRDIKPENLLVCEYPDGTKSLKLGDFGLATVVEGPLYTVCGTPTYVAPEIIAETGYGLKVDIWAAGVITYILLCGFPPFRSENNLQEDLFDQILAGKLEFPAPYWDNITDSAKELISQMLQVNVEARCTAGQILSHPWVSDDASQENNMQAEVTGKLKQHFNNALPKQNSTTTGVSVIMNTALDKEGQIFCSKHCQDSGRPGMEPISPVPPSVEEIPVPGEAVPAPTPPESPTPHPPPAAPGGERAGTWRRHRD.

Positions 1 to 45 (MASTRSIELEHFEERDKRPRPGSRRGAPSSSGGSSSSGPKGNGLI) are disordered. Positions 7-19 (IELEHFEERDKRP) are enriched in basic and acidic residues. The span at 24-39 (RRGAPSSSGGSSSSGP) shows a compositional bias: low complexity. Thr61 carries the post-translational modification Phosphothreonine. Doublecortin domains are found at residues 72–158 (KKAR…VDYT) and 197–280 (KLVT…AQDD). Composition is skewed to low complexity over residues 300–312 (AVKY…PGPS) and 324–347 (TPSS…SPGS). The tract at residues 300 to 378 (AVKYSGSKSP…ELDRCISPEG (79 aa)) is disordered. At Ser362 the chain carries Phosphoserine. The region spanning 394–651 (YKIGKVIGDG…AGQILSHPWV (258 aa)) is the Protein kinase domain. ATP-binding positions include 400–408 (IGDGNFAVV) and Lys423. The active-site Proton acceptor is the Asp515. The residue at position 647 (Ser647) is a Phosphoserine. Thr666 carries the phosphothreonine modification. The disordered stretch occupies residues 707 to 766 (CQDSGRPGMEPISPVPPSVEEIPVPGEAVPAPTPPESPTPHPPPAAPGGERAGTWRRHRD). Over residues 724–736 (SVEEIPVPGEAVP) the composition is skewed to low complexity. Pro residues predominate over residues 737 to 752 (APTPPESPTPHPPPAA).

It belongs to the protein kinase superfamily. CAMK Ser/Thr protein kinase family. CaMK subfamily. In terms of assembly, binds to and stabilizes microtubules. Interacts with MAPK8IP1/JIP-1, MAPK8IP2/JIP-2, MAPK9/JNK2, PPP1R9B/NEURABIN-2 and actin. Post-translationally, autophosphorylated. In terms of tissue distribution, expressed in the brain, heart and eyes.

It localises to the cytoplasm. It is found in the cytoskeleton. The catalysed reaction is L-seryl-[protein] + ATP = O-phospho-L-seryl-[protein] + ADP + H(+). It catalyses the reaction L-threonyl-[protein] + ATP = O-phospho-L-threonyl-[protein] + ADP + H(+). Protein kinase with a significantly reduced C(a2+)/CAM affinity and dependence compared to other members of the CaMK family. May play a role in the down-regulation of CRE-dependent gene activation probably by phosphorylation of the CREB coactivator CRTC2/TORC2 and the resulting retention of TORC2 in the cytoplasm. This is Serine/threonine-protein kinase DCLK2 (DCLK2) from Homo sapiens (Human).